The sequence spans 462 residues: MTESVSKPVRPRAAVILAAGQGTRMKSPTPKVLHRLAGRTLLDHAIDAAEGLGCERIIVVVGAHSPQVGESARKRLGPDATVIQDPPLGTGHAVLAAKDALADFHGDVVVTYADCPLTTAPVIAPLFDLITHVAHVAVLGFEAQNPTGYGRLILAPGHVLLRIVEEKEADLATKQVKHCNSGVLAADRAVLFDLLANVRNDNAKGEYYLTDVVGLAHERHLSTRTAFAPEASVQGVNAQAELAAAEAVWQQNRRKALMVDGVTMPAPDTVHLAWDTQIAGGAVVEQFVVFGPGVSVASGAVIKAFSHLEGAVVGEGALIGPYARLRPGAEIGPDAHIGNFVEVKKVKVGAGAKANHLSYLGDGSVGEKANIGAGTIFCNYDGFEKFETHVGKGAFIGSNSALVAPVRVGDGAMTGSGSVITKDVEDGALALSRADQTSKAGWATKFRAIKQAQKDKKKDKKA.

Residues 1-239 (MTESVSKPVR…EASVQGVNAQ (239 aa)) are pyrophosphorylase. UDP-N-acetyl-alpha-D-glucosamine is bound by residues 17-20 (LAAG), K31, Q84, and 89-90 (GT). D114 contributes to the Mg(2+) binding site. UDP-N-acetyl-alpha-D-glucosamine-binding residues include G150, E165, N180, and N237. Residue N237 coordinates Mg(2+). The interval 240-260 (AELAAAEAVWQQNRRKALMVD) is linker. The interval 261–462 (GVTMPAPDTV…QKDKKKDKKA (202 aa)) is N-acetyltransferase. 2 residues coordinate UDP-N-acetyl-alpha-D-glucosamine: R326 and K344. Residue H356 is the Proton acceptor of the active site. Residues Y359 and N370 each coordinate UDP-N-acetyl-alpha-D-glucosamine. Residues A373, 379–380 (NY), S398, S416, and R433 contribute to the acetyl-CoA site.

This sequence in the N-terminal section; belongs to the N-acetylglucosamine-1-phosphate uridyltransferase family. It in the C-terminal section; belongs to the transferase hexapeptide repeat family. As to quaternary structure, homotrimer. Mg(2+) serves as cofactor.

It localises to the cytoplasm. It catalyses the reaction alpha-D-glucosamine 1-phosphate + acetyl-CoA = N-acetyl-alpha-D-glucosamine 1-phosphate + CoA + H(+). It carries out the reaction N-acetyl-alpha-D-glucosamine 1-phosphate + UTP + H(+) = UDP-N-acetyl-alpha-D-glucosamine + diphosphate. It participates in nucleotide-sugar biosynthesis; UDP-N-acetyl-alpha-D-glucosamine biosynthesis; N-acetyl-alpha-D-glucosamine 1-phosphate from alpha-D-glucosamine 6-phosphate (route II): step 2/2. Its pathway is nucleotide-sugar biosynthesis; UDP-N-acetyl-alpha-D-glucosamine biosynthesis; UDP-N-acetyl-alpha-D-glucosamine from N-acetyl-alpha-D-glucosamine 1-phosphate: step 1/1. It functions in the pathway bacterial outer membrane biogenesis; LPS lipid A biosynthesis. Catalyzes the last two sequential reactions in the de novo biosynthetic pathway for UDP-N-acetylglucosamine (UDP-GlcNAc). The C-terminal domain catalyzes the transfer of acetyl group from acetyl coenzyme A to glucosamine-1-phosphate (GlcN-1-P) to produce N-acetylglucosamine-1-phosphate (GlcNAc-1-P), which is converted into UDP-GlcNAc by the transfer of uridine 5-monophosphate (from uridine 5-triphosphate), a reaction catalyzed by the N-terminal domain. In Caulobacter vibrioides (strain ATCC 19089 / CIP 103742 / CB 15) (Caulobacter crescentus), this protein is Bifunctional protein GlmU.